We begin with the raw amino-acid sequence, 456 residues long: Enolase (456 aa).

Residue Gln177 participates in (2R)-2-phosphoglycerate binding. Glu219 acts as the Proton donor in catalysis. Positions 256, 310, and 337 each coordinate Mg(2+). (2R)-2-phosphoglycerate-binding residues include Lys362, Arg391, Ser392, and Lys413. Lys362 serves as the catalytic Proton acceptor.

It belongs to the enolase family. As to quaternary structure, homodimer. Requires Mg(2+) as cofactor.

The protein resides in the cytoplasm. The protein localises to the secreted. Its subcellular location is the cell surface. It carries out the reaction (2R)-2-phosphoglycerate = phosphoenolpyruvate + H2O. It functions in the pathway carbohydrate degradation; glycolysis; pyruvate from D-glyceraldehyde 3-phosphate: step 4/5. Catalyzes the reversible conversion of 2-phosphoglycerate (2-PG) into phosphoenolpyruvate (PEP). It is essential for the degradation of carbohydrates via glycolysis. Functionally, 'Moonlights' as a plasminogen receptor. Binds plasminogen, but no fibronectin binding was observed. Plasminogen binding increases bacterial adherence to host cells; plasmin activity leads to degradation of host extracellular matrix proteins, facilitating bacterial dissemination and disease spread. The polypeptide is Enolase (Mycoplasma pneumoniae (strain ATCC 29342 / M129 / Subtype 1) (Mycoplasmoides pneumoniae)).